A 160-amino-acid chain; its full sequence is MTTFTHINSQGEANMVDVSAKAETVREARAEAIVTMSKETLAMIVEGKHHKGDVFATARIAGIQAAKRTWELIPLCHPLLLSKVEVNLEPLLETNRVRIQSLCKLTGKTGVEMEALTAVSVAALTIYDMCKAVQKDIVIEQVRLLEKSGGKSGHFVAEEK.

Substrate contacts are provided by residues 75 to 77 (LCH) and 113 to 114 (ME). Asp128 is a catalytic residue.

This sequence belongs to the MoaC family. Homohexamer; trimer of dimers.

The catalysed reaction is (8S)-3',8-cyclo-7,8-dihydroguanosine 5'-triphosphate = cyclic pyranopterin phosphate + diphosphate. Its pathway is cofactor biosynthesis; molybdopterin biosynthesis. Catalyzes the conversion of (8S)-3',8-cyclo-7,8-dihydroguanosine 5'-triphosphate to cyclic pyranopterin monophosphate (cPMP). The protein is Cyclic pyranopterin monophosphate synthase of Haemophilus influenzae (strain PittEE).